We begin with the raw amino-acid sequence, 428 residues long: C4-dicarboxylate transport protein (428 aa).

The next 9 helical transmembrane spans lie at 7-27 (SLYFWVLVAIALGVILGIVAP), 40-60 (FIKLIKMVIAPIIFCTVVLGI), 75-95 (LALLYFEVVSTVSLILGLLIV), 143-163 (AFARGEILQVLLLAVLFGIAL), 196-216 (PIGAFGAMAFTIGAYGIGSLF), 221-241 (LMATFYLTCLCFIFLVLGAIA), 306-326 (IYLTMAAVFVAQATNSAMTLG), 329-349 (FTLLAVLLLMSKGAAGVTGSG), and 351-371 (IVLAATLSAIGKVPVGGLALI).

The protein belongs to the dicarboxylate/amino acid:cation symporter (DAACS) (TC 2.A.23) family.

The protein localises to the cell inner membrane. Its function is as follows. Responsible for the transport of dicarboxylates such as succinate, fumarate, and malate from the periplasm across the membrane. This is C4-dicarboxylate transport protein from Solibacter usitatus (strain Ellin6076).